A 426-amino-acid chain; its full sequence is D-tagatose-1,6-bisphosphate aldolase subunit KbaZ (426 aa).

It belongs to the GatZ/KbaZ family. KbaZ subfamily. As to quaternary structure, forms a complex with KbaY.

The protein operates within carbohydrate metabolism; D-tagatose 6-phosphate degradation; D-glyceraldehyde 3-phosphate and glycerone phosphate from D-tagatose 6-phosphate: step 2/2. Component of the tagatose-1,6-bisphosphate aldolase KbaYZ that is required for full activity and stability of the Y subunit. Could have a chaperone-like function for the proper and stable folding of KbaY. When expressed alone, KbaZ does not show any aldolase activity. This chain is D-tagatose-1,6-bisphosphate aldolase subunit KbaZ, found in Escherichia coli O157:H7.